Reading from the N-terminus, the 239-residue chain is Pyridoxine 5'-phosphate synthase (239 aa).

N7 lines the 3-amino-2-oxopropyl phosphate pocket. 9 to 10 lines the 1-deoxy-D-xylulose 5-phosphate pocket; sequence DH. 3-amino-2-oxopropyl phosphate is bound at residue R18. H43 serves as the catalytic Proton acceptor. Residues R45 and H50 each contribute to the 1-deoxy-D-xylulose 5-phosphate site. Catalysis depends on E70, which acts as the Proton acceptor. T100 provides a ligand contact to 1-deoxy-D-xylulose 5-phosphate. H191 acts as the Proton donor in catalysis. Residues G192 and 213-214 each bind 3-amino-2-oxopropyl phosphate; that span reads GH.

The protein belongs to the PNP synthase family. Homooctamer; tetramer of dimers.

It localises to the cytoplasm. It catalyses the reaction 3-amino-2-oxopropyl phosphate + 1-deoxy-D-xylulose 5-phosphate = pyridoxine 5'-phosphate + phosphate + 2 H2O + H(+). The protein operates within cofactor biosynthesis; pyridoxine 5'-phosphate biosynthesis; pyridoxine 5'-phosphate from D-erythrose 4-phosphate: step 5/5. In terms of biological role, catalyzes the complicated ring closure reaction between the two acyclic compounds 1-deoxy-D-xylulose-5-phosphate (DXP) and 3-amino-2-oxopropyl phosphate (1-amino-acetone-3-phosphate or AAP) to form pyridoxine 5'-phosphate (PNP) and inorganic phosphate. The protein is Pyridoxine 5'-phosphate synthase of Geobacter sp. (strain M21).